Here is a 234-residue protein sequence, read N- to C-terminus: Putative ankyrin repeat protein RF_0063 (234 aa).

ANK repeat units lie at residues 149–180 and 184–213; these read NNNT…TISI and YNNT…QKAL.

The protein is Putative ankyrin repeat protein RF_0063 of Rickettsia felis (strain ATCC VR-1525 / URRWXCal2) (Rickettsia azadi).